Here is a 236-residue protein sequence, read N- to C-terminus: Purine nucleoside phosphorylase DeoD-type 2 (236 aa).

A purine D-ribonucleoside is bound at residue His-5. Phosphate is bound by residues Gly-21, Arg-25, Arg-44, and 88 to 91; that span reads RVGS. Residues 180 to 182 and 204 to 205 each bind a purine D-ribonucleoside; these read DME and SD. The active-site Proton donor is the Asp-205.

This sequence belongs to the PNP/UDP phosphorylase family. As to quaternary structure, homohexamer; trimer of homodimers.

The enzyme catalyses a purine D-ribonucleoside + phosphate = a purine nucleobase + alpha-D-ribose 1-phosphate. It carries out the reaction a purine 2'-deoxy-D-ribonucleoside + phosphate = a purine nucleobase + 2-deoxy-alpha-D-ribose 1-phosphate. In terms of biological role, catalyzes the reversible phosphorolytic breakdown of the N-glycosidic bond in the beta-(deoxy)ribonucleoside molecules, with the formation of the corresponding free purine bases and pentose-1-phosphate. The polypeptide is Purine nucleoside phosphorylase DeoD-type 2 (Aliivibrio fischeri (strain ATCC 700601 / ES114) (Vibrio fischeri)).